Here is a 175-residue protein sequence, read N- to C-terminus: MRIVPEKLVFKAPLNKQSTEYIKLENDGEKRVIFKVRTSAPTKYCVRPNVAIIGAHESVNVQIVFLGLPKSTADDEMDQKRDKFLIVTLPIPAAYQNVEDGELLSDWPNLEEQYKDDIVFKKIKIFHSVLPKRKPSGNHDAESARAPSAGNGQSLSSRALLIITVIALLVGWIYY.

The MSP domain occupies 1–125 (MRIVPEKLVF…DDIVFKKIKI (125 aa)). Over 1–154 (MRIVPEKLVF…RAPSAGNGQS (154 aa)) the chain is Cytoplasmic. The disordered stretch occupies residues 133–152 (RKPSGNHDAESARAPSAGNG). A helical; Anchor for type IV membrane protein transmembrane segment spans residues 155–175 (LSSRALLIITVIALLVGWIYY).

The protein belongs to the VAMP-associated protein (VAP) (TC 9.B.17) family.

It is found in the membrane. Its function is as follows. Targets proteins containing a FFAT motif to membranes. Involved in regulation of phospholipid metabolism. The chain is Vesicle-associated membrane protein-associated protein SCS22 (SCS22) from Saccharomyces cerevisiae (strain ATCC 204508 / S288c) (Baker's yeast).